We begin with the raw amino-acid sequence, 469 residues long: Alpha,alpha-trehalose-phosphate synthase [UDP-forming] (469 aa).

D-glucose 6-phosphate contacts are provided by tyrosine 87 and aspartate 141. UDP contacts are provided by arginine 279 and lysine 284. Positions 279 and 284 each coordinate UDP-alpha-D-glucose. Arginine 317 contacts D-glucose 6-phosphate. 378-386 (DGMNLVSYE) provides a ligand contact to UDP-alpha-D-glucose. 382–386 (LVSYE) is a binding site for UDP.

Belongs to the glycosyltransferase 20 family.

The catalysed reaction is D-glucose 6-phosphate + UDP-alpha-D-glucose = alpha,alpha-trehalose 6-phosphate + UDP + H(+). The protein operates within carbohydrate biosynthesis. Functionally, synthase catalytic subunit of the trehalose synthase complex that catalyzes the production of trehalose from glucose-6-phosphate and UDP-alpha-D-glucose in a two step process. The disaccharide trehalose serves as a storage carbohydrate that is mobilized during spore germination. The sequence is that of Alpha,alpha-trehalose-phosphate synthase [UDP-forming] from Yarrowia lipolytica (strain CLIB 122 / E 150) (Yeast).